Here is a 326-residue protein sequence, read N- to C-terminus: MNVNQGTVGSDPVILATAGYDHTVRFWQAHSGICTRTVQHQDSQVNSLEVTPDRSMIAAAGYQHIRMYDLNSNNPNPVINYDGVSKNITSVGFHEDGRWMYTGGEDCMARIWDLRSRNLQCQRIFQVNAPINCVCLHPNQAELIVGDQSGVIHIWDLKTDHNEQLIPEPDVSVNSVHIDPDASYMAAVNSSGNCYVWNLAGGMGDEVTQLIPKTKIPAHKRYSLRCKFSPDSTLLATCSADQTCKIWRTSNFSLMTELSIKSNNPGETSRGWMWDCAFSGDSQYIVTASSDNLARLWCVETGEIKREYSGHQKAVVCLAFNDSVLG.

WD repeat units follow at residues 1–37 (MNVNQGTVGSDPVILATAGYDHTVRFWQAHSGICTRT), 40–80 (HQDS…PVIN), 83–122 (GVSKNITSVGFHEDGRWMYTGGEDCMARIWDLRSRNLQCQ), 126–165 (QVNAPINCVCLHPNQAELIVGDQSGVIHIWDLKTDHNEQL), 168–207 (EPDVSVNSVHIDPDASYMAAVNSSGNCYVWNLAGGMGDEV), 218–257 (AHKRYSLRCKFSPDSTLLATCSADQTCKIWRTSNFSLMTE), and 268–309 (TSRG…REYS).

It belongs to the WD repeat LST8 family. In terms of assembly, part of the mechanistic target of rapamycin complex 1 (mTORC1) which contains MTOR, MLST8 and RPTOR. Component of the mechanistic target of rapamycin complex 2 (mTORC2), consisting in two heterotretramers composed of MTOR, MLST8, RICTOR and MAPKAP1/SIN1.

Its subcellular location is the lysosome membrane. It is found in the cytoplasm. Its function is as follows. Subunit of both mTORC1 and mTORC2, which regulates cell growth and survival in response to nutrient and hormonal signals. mTORC1 is activated in response to growth factors or amino acids. In response to nutrients, mTORC1 is recruited to the lysosome membrane and promotes protein, lipid and nucleotide synthesis by phosphorylating several substrates, such as ribosomal protein S6 kinase (RPS6KB1 and RPS6KB2) and EIF4EBP1 (4E-BP1). In the same time, it inhibits catabolic pathways by phosphorylating the autophagy initiation components ULK1 and ATG13, as well as transcription factor TFEB, a master regulators of lysosomal biogenesis and autophagy. The mTORC1 complex is inhibited in response to starvation and amino acid depletion. Within mTORC1, MLST8 interacts directly with MTOR and enhances its kinase activity. In nutrient-poor conditions, stabilizes the MTOR-RPTOR interaction and favors RPTOR-mediated inhibition of MTOR activity. As part of the mTORC2 complex, transduces signals from growth factors to pathways involved in proliferation, cytoskeletal organization, lipogenesis and anabolic output. mTORC2 is also activated by growth factors, but seems to be nutrient-insensitive. In response to growth factors, mTORC2 phosphorylates and activates AGC protein kinase family members, including AKT (AKT1, AKT2 and AKT3), PKC (PRKCA, PRKCB and PRKCE) and SGK1. mTORC2 functions upstream of Rho GTPases to regulate the actin cytoskeleton, probably by activating one or more Rho-type guanine nucleotide exchange factors. mTORC2 promotes the serum-induced formation of stress-fibers or F-actin. Within mTORC2, MLST8 acts as a bridge between MAPKAP1/SIN1 and MTOR. The polypeptide is Target of rapamycin complex subunit lst8 (mlst8) (Danio rerio (Zebrafish)).